The chain runs to 554 residues: Urocanate hydratase (554 aa).

NAD(+) contacts are provided by residues 51–52, Gln129, 175–177, Glu195, 241–242, 262–266, 272–273, and Tyr321; these read GG, GMG, NA, QTSAH, and YL. Cys409 is a catalytic residue. Gly491 is an NAD(+) binding site.

The protein belongs to the urocanase family. NAD(+) is required as a cofactor.

Its subcellular location is the cytoplasm. The catalysed reaction is 4-imidazolone-5-propanoate = trans-urocanate + H2O. The protein operates within amino-acid degradation; L-histidine degradation into L-glutamate; N-formimidoyl-L-glutamate from L-histidine: step 2/3. Catalyzes the conversion of urocanate to 4-imidazolone-5-propionate. In Caulobacter vibrioides (strain ATCC 19089 / CIP 103742 / CB 15) (Caulobacter crescentus), this protein is Urocanate hydratase.